The primary structure comprises 961 residues: Alanine--tRNA ligase, chloroplastic/mitochondrial (961 aa).

Positions 641, 645, 743, and 747 each coordinate Zn(2+).

This sequence belongs to the class-II aminoacyl-tRNA synthetase family. In terms of assembly, monomer. Zn(2+) serves as cofactor.

The protein localises to the plastid. It localises to the chloroplast. Its subcellular location is the mitochondrion. The enzyme catalyses tRNA(Ala) + L-alanine + ATP = L-alanyl-tRNA(Ala) + AMP + diphosphate. Functionally, catalyzes the attachment of alanine to tRNA(Ala) in a two-step reaction: alanine is first activated by ATP to form Ala-AMP and then transferred to the acceptor end of tRNA(Ala). Also edits incorrectly charged tRNA(Ala) via its editing domain. In Sorghum bicolor (Sorghum), this protein is Alanine--tRNA ligase, chloroplastic/mitochondrial.